We begin with the raw amino-acid sequence, 219 residues long: 3-dehydroquinate dehydratase (219 aa).

3-dehydroquinate-binding positions include E28–R30 and R61. H116 acts as the Proton donor/acceptor in catalysis. K142 (schiff-base intermediate with substrate) is an active-site residue. 3-dehydroquinate-binding residues include R180 and Q203.

It belongs to the type-I 3-dehydroquinase family. Homodimer.

The catalysed reaction is 3-dehydroquinate = 3-dehydroshikimate + H2O. It participates in metabolic intermediate biosynthesis; chorismate biosynthesis; chorismate from D-erythrose 4-phosphate and phosphoenolpyruvate: step 3/7. Involved in the third step of the chorismate pathway, which leads to the biosynthesis of aromatic amino acids. Catalyzes the cis-dehydration of 3-dehydroquinate (DHQ) and introduces the first double bond of the aromatic ring to yield 3-dehydroshikimate. The polypeptide is 3-dehydroquinate dehydratase (Aquifex aeolicus (strain VF5)).